Here is a 600-residue protein sequence, read N- to C-terminus: Arginine--tRNA ligase (600 aa).

Residues Ser-151–Asn-153, His-162, Tyr-332, Asp-336, and Gln-360 each bind L-arginine. Positions Pro-152 to His-162 match the 'HIGH' region motif.

Belongs to the class-I aminoacyl-tRNA synthetase family.

It carries out the reaction tRNA(Arg) + L-arginine + ATP = L-arginyl-tRNA(Arg) + AMP + diphosphate. The chain is Arginine--tRNA ligase (RARS) from Acanthamoeba polyphaga mimivirus (APMV).